The primary structure comprises 1347 residues: Agglutinin-like protein 5 (1347 aa).

The first 19 residues, 1–19 (MIQQFTLLFLYLSFATAKA), serve as a signal peptide directing secretion. 4 disulfides stabilise this stretch: cysteine 73-cysteine 150, cysteine 96-cysteine 112, cysteine 205-cysteine 298, and cysteine 227-cysteine 256. ALS repeat units follow at residues 365–396 (TTIT…VDVP), 401–432 (TTVT…VQVP), 438–469 (TTTT…VREP), 474–505 (VTTT…VREP), 510–541 (VTTT…IKEP), and 546–577 (VTTT…IHDP). Disordered regions lie at residues 580–678 (ESSS…WDSS), 704–725 (VSNS…SNTS), and 789–813 (SDPT…FSDE). Asparagine 593 and asparagine 723 each carry an N-linked (GlcNAc...) asparagine glycan. Asparagine 847 carries an N-linked (GlcNAc...) asparagine glycan. Disordered stretches follow at residues 855–896 (ESES…STVT), 909–964 (TGMP…KSSV), 977–1021 (SETS…KESS), 1062–1111 (EDNE…VSSL), and 1139–1180 (ATSL…NRLS). 3 stretches are compositionally biased toward low complexity: residues 856–870 (SESS…ASES), 879–896 (SEST…STVT), and 921–939 (TSDV…PTSA). Residues 940–950 (EQSITDNPNID) are compositionally biased toward polar residues. Low complexity-rich tracts occupy residues 951 to 964 (SSQT…KSSV) and 977 to 1002 (SETS…NSDT). Composition is skewed to polar residues over residues 1003–1021 (GNIN…KESS) and 1066–1088 (PNTF…SVLS). 2 stretches are compositionally biased toward low complexity: residues 1097–1111 (IKTS…VSSL) and 1140–1158 (TSLR…SSGT). Residues asparagine 1229 and asparagine 1254 are each glycosylated (N-linked (GlcNAc...) asparagine). The GPI-anchor amidated serine moiety is linked to residue serine 1326. Residues 1327–1347 (SATKHPSWLLKFISVALFFFL) constitute a propeptide, removed in mature form.

It belongs to the ALS family. In terms of assembly, forms homodimers through the tandem repeats. Aggregates in amyloid-like structures, with self-propagating secondary-structure changes, amyloid-characteristic dye binding, and induced birefringence. The GPI-anchor is attached to the protein in the endoplasmic reticulum and serves to target the protein to the cell surface. There, the glucosamine-inositol phospholipid moiety is cleaved off and the GPI-modified mannoprotein is covalently attached via its lipidless GPI glycan remnant to the 1,6-beta-glucan of the outer cell wall layer.

The protein resides in the cell membrane. It is found in the secreted. It localises to the cell wall. Functionally, cell surface adhesion protein which mediates both yeast-to-host tissue adherence and yeast aggregation. Plays an important role in the pathogenesis of C.albicans infections. Forms amyloid structures, essential for cell-cell association and cell-substrate adhesion to polystyrene. The sequence is that of Agglutinin-like protein 5 (ALS5) from Candida albicans (strain SC5314 / ATCC MYA-2876) (Yeast).